A 168-amino-acid chain; its full sequence is Photosystem I assembly protein Ycf3 (168 aa).

TPR repeat units lie at residues 35 to 68 (AFTYYRDGMSAQSEGNYAEALQNYYEATRLEIDP), 72 to 105 (SYILYNIGLIHTSNGEHTKALEYYFRALERNPFL), and 120 to 153 (GEQAIRQGDSEIAEAWSDQAAEYWKQAISLTPGN).

The protein belongs to the Ycf3 family.

The protein resides in the plastid. It is found in the chloroplast thylakoid membrane. Functionally, essential for the assembly of the photosystem I (PSI) complex. May act as a chaperone-like factor to guide the assembly of the PSI subunits. This chain is Photosystem I assembly protein Ycf3, found in Piper cenocladum (Ant piper).